The sequence spans 22 residues: Brain peptide MVPVPVHHMADELLRNGPDTVI (22 aa).

This Apis mellifera (Honeybee) protein is Brain peptide MVPVPVHHMADELLRNGPDTVI.